Here is a 202-residue protein sequence, read N- to C-terminus: Capsid protein (202 aa).

This sequence belongs to the tymoviruses capsid protein family.

It is found in the virion. Self-assembles to form a T=3 icosahedral capsid composed of 180 copies of the capsid protein. The capsid encapsulates the single-stranded RNA genome. The protein is Capsid protein of Erysimum (ELV).